The following is a 603-amino-acid chain: Elongation factor 4 (603 aa).

One can recognise a tr-type G domain in the interval 7-191; that stretch reads DNIRNFSIVA…AIVTRLPPPK (185 aa). GTP contacts are provided by residues 19-24 and 138-141; these read DHGKST and NKVD.

This sequence belongs to the TRAFAC class translation factor GTPase superfamily. Classic translation factor GTPase family. LepA subfamily.

The protein localises to the cell inner membrane. The enzyme catalyses GTP + H2O = GDP + phosphate + H(+). Its function is as follows. Required for accurate and efficient protein synthesis under certain stress conditions. May act as a fidelity factor of the translation reaction, by catalyzing a one-codon backward translocation of tRNAs on improperly translocated ribosomes. Back-translocation proceeds from a post-translocation (POST) complex to a pre-translocation (PRE) complex, thus giving elongation factor G a second chance to translocate the tRNAs correctly. Binds to ribosomes in a GTP-dependent manner. This Rhodopseudomonas palustris (strain BisA53) protein is Elongation factor 4.